The chain runs to 492 residues: MITLESLEMLLSIDENELLDDLVVTLLATPQLAFFFEKYPSLKSALLNDLPHWKETLKQRLRTTQVPPDLEKEFSCYQRSQSIDNQAFQTRLPAIMDTLSNVESPFLTQASQLITAPERTLGQKVTSGLHALFLQRWRLSLTLQTVSLHQQLMEQEREILLDELQQRLTLSGKLEPILAENENAAGRLWDLSAAQRIQTDPRPLLDFGAFLQRQPALQKLAERLGRSRETKSILTQEAPKEAFRVSVREPATVPEQVSGVHQSDDILRLMPTELVTLGISELEYEFYRRLLEHRLLTYRLQGESWREKITERPVVHQQNEQQPRGPFIVCVDTSGSMGGFNERCAKAFCLALMRIALADNRRCYIMLFSTGVVKYELTSADGLEQAIRFLSQSFRGGTDMSACLSALLDKMDDALWHDADAVVISDFIAQRLPDEVVNKVKSRQTQLQHRFHAVAMSDHGKPGIMHIFDHIWRFDTGLKSRLMRRWQHGKAY.

This sequence belongs to the ViaA family. In terms of assembly, homodimer. Interacts with RavA.

The protein localises to the cytoplasm. Functionally, component of the RavA-ViaA chaperone complex, which may act on the membrane to optimize the function of some of the respiratory chains. ViaA stimulates the ATPase activity of RavA. The protein is Regulatory protein ViaA of Pectobacterium carotovorum subsp. carotovorum (strain PC1).